We begin with the raw amino-acid sequence, 392 residues long: Cyclic di-GMP phosphodiesterase RocR (392 aa).

The 122-residue stretch at 5–126 folds into the Response regulatory domain; it reads NVLVLEDEPF…RITALLTRYN (122 aa). At Asp56 the chain carries 4-aspartylphosphate. In terms of domain architecture, EAL spans 140–392; sequence ELPSVADVVR…QHFLDYCSGS (253 aa). The Mg(2+) site is built by Glu175, Asn233, Glu265, and Asp295. Glu352 serves as the catalytic Proton acceptor.

In terms of assembly, homotetramer. Exhibits a highly unusual tetrameric structure arranged around a single dyad, with the four subunits adopting two distinctly different conformations, with only two active sites accessible for substrate binding. Interacts with RocS1. Requires Mg(2+) as cofactor.

It carries out the reaction 3',3'-c-di-GMP + H2O = 5'-phosphoguanylyl(3'-&gt;5')guanosine + H(+). With respect to regulation, phosphorylation of Asp-56 probably induces local conformational changes in the response regulatory domain. These structural changes are transmitted to the adjacent EAL domain, then the signal is further transmitted down to the active site. The phosphodiesterase activity is inhibited by Ca(2+) and Zn(2+). Phosphodiesterase activity is inhibited by a benzoisothiazolinone derivative that specifically inhibited RocR, but not some other phosphodiesterases. Phosphodiesterase (PDE) that catalyzes the hydrolysis of cyclic diguanylate (c-di-GMP) to 5'-pGpG. Cannot use cyclic AMP or cyclic GMP. Part of the RocSAR two-component regulatory signaling system (also known as the SadARS system), which regulates biofilm maturation, type III secretion and expression of the cup fimbrial-gene cluster. Negatively regulates the expression of cup genes by antagonizing the activity of RocA1. The sequence is that of Cyclic di-GMP phosphodiesterase RocR from Pseudomonas aeruginosa (strain ATCC 15692 / DSM 22644 / CIP 104116 / JCM 14847 / LMG 12228 / 1C / PRS 101 / PAO1).